The following is a 319-amino-acid chain: NADH-quinone oxidoreductase subunit H 1 (319 aa).

9 consecutive transmembrane segments (helical) span residues 5 to 25, 78 to 98, 109 to 129, 147 to 167, 179 to 199, 214 to 234, 238 to 258, 262 to 282, and 294 to 314; these read ILTA…AGVF, LAPA…AFGE, VMFL…GALA, LAYE…AGSL, VWFI…GIAA, LVGG…FLGE, ILLV…GPWL, IWFG…RAAL, and AWKV…FIVV.

Belongs to the complex I subunit 1 family. As to quaternary structure, NDH-1 is composed of 14 different subunits. Subunits NuoA, H, J, K, L, M, N constitute the membrane sector of the complex.

The protein localises to the cell inner membrane. The enzyme catalyses a quinone + NADH + 5 H(+)(in) = a quinol + NAD(+) + 4 H(+)(out). In terms of biological role, NDH-1 shuttles electrons from NADH, via FMN and iron-sulfur (Fe-S) centers, to quinones in the respiratory chain. The immediate electron acceptor for the enzyme in this species is believed to be ubiquinone. Couples the redox reaction to proton translocation (for every two electrons transferred, four hydrogen ions are translocated across the cytoplasmic membrane), and thus conserves the redox energy in a proton gradient. This subunit may bind ubiquinone. The polypeptide is NADH-quinone oxidoreductase subunit H 1 (Rhodopseudomonas palustris (strain BisA53)).